Reading from the N-terminus, the 284-residue chain is 2-dehydro-3-deoxyphosphooctonate aldolase (284 aa).

Belongs to the KdsA family.

Its subcellular location is the cytoplasm. The catalysed reaction is D-arabinose 5-phosphate + phosphoenolpyruvate + H2O = 3-deoxy-alpha-D-manno-2-octulosonate-8-phosphate + phosphate. It functions in the pathway carbohydrate biosynthesis; 3-deoxy-D-manno-octulosonate biosynthesis; 3-deoxy-D-manno-octulosonate from D-ribulose 5-phosphate: step 2/3. It participates in bacterial outer membrane biogenesis; lipopolysaccharide biosynthesis. This chain is 2-dehydro-3-deoxyphosphooctonate aldolase, found in Cronobacter sakazakii (strain ATCC BAA-894) (Enterobacter sakazakii).